A 76-amino-acid polypeptide reads, in one-letter code: Translational regulator CsrA (76 aa).

Belongs to the CsrA/RsmA family. As to quaternary structure, homodimer; the beta-strands of each monomer intercalate to form a hydrophobic core, while the alpha-helices form wings that extend away from the core.

The protein resides in the cytoplasm. Its function is as follows. A translational regulator that binds mRNA to regulate translation initiation and/or mRNA stability. Usually binds in the 5'-UTR at or near the Shine-Dalgarno sequence preventing ribosome-binding, thus repressing translation. Its main target seems to be the major flagellin gene, while its function is anatagonized by FliW. This is Translational regulator CsrA from Helicobacter pylori (strain P12).